A 201-amino-acid polypeptide reads, in one-letter code: Dephospho-CoA kinase (201 aa).

Positions 7-201 (AIALSGGIGT…IETIKKDFHV (195 aa)) constitute a DPCK domain. Residue 15-20 (GTGKST) coordinates ATP.

It belongs to the CoaE family.

Its subcellular location is the cytoplasm. It carries out the reaction 3'-dephospho-CoA + ATP = ADP + CoA + H(+). It participates in cofactor biosynthesis; coenzyme A biosynthesis; CoA from (R)-pantothenate: step 5/5. In terms of biological role, catalyzes the phosphorylation of the 3'-hydroxyl group of dephosphocoenzyme A to form coenzyme A. The polypeptide is Dephospho-CoA kinase (Wolinella succinogenes (strain ATCC 29543 / DSM 1740 / CCUG 13145 / JCM 31913 / LMG 7466 / NCTC 11488 / FDC 602W) (Vibrio succinogenes)).